The sequence spans 197 residues: Dephospho-CoA kinase (197 aa).

One can recognise a DPCK domain in the interval I2–V197. A10–T15 contributes to the ATP binding site.

The protein belongs to the CoaE family.

It localises to the cytoplasm. It catalyses the reaction 3'-dephospho-CoA + ATP = ADP + CoA + H(+). It participates in cofactor biosynthesis; coenzyme A biosynthesis; CoA from (R)-pantothenate: step 5/5. Its function is as follows. Catalyzes the phosphorylation of the 3'-hydroxyl group of dephosphocoenzyme A to form coenzyme A. The chain is Dephospho-CoA kinase from Streptococcus thermophilus (strain ATCC BAA-250 / LMG 18311).